We begin with the raw amino-acid sequence, 75 residues long: MVKRKGASSSEEGWNYEAKVAEIEGIITRIEAGELELEAVFEQFASAVEYLRQCESFLQQRQQQVDLLIETLSEE.

It belongs to the XseB family. In terms of assembly, heterooligomer composed of large and small subunits.

The protein localises to the cytoplasm. It carries out the reaction Exonucleolytic cleavage in either 5'- to 3'- or 3'- to 5'-direction to yield nucleoside 5'-phosphates.. In terms of biological role, bidirectionally degrades single-stranded DNA into large acid-insoluble oligonucleotides, which are then degraded further into small acid-soluble oligonucleotides. This is Exodeoxyribonuclease 7 small subunit from Nostoc punctiforme (strain ATCC 29133 / PCC 73102).